The following is a 376-amino-acid chain: Phosphatidylinositol/phosphatidylcholine transfer protein SFH11 (376 aa).

Residues 1-20 (MQETDRDIHISDGTMNKEEQ) show a composition bias toward basic and acidic residues. The interval 1 to 24 (MQETDRDIHISDGTMNKEEQSPNN) is disordered. The region spanning 92-266 (EYGEVKKHYP…FLGGNCTCSD (175 aa)) is the CRAL-TRIO domain. Residues 323–357 (MEKYAALKTAVKDSQKRIEMLEISLHETKKVLNGL) adopt a coiled-coil conformation.

It belongs to the SFH family.

Its subcellular location is the golgi apparatus membrane. It is found in the cell membrane. Its function is as follows. Required for transport of secretory proteins from the Golgi complex. Catalyzes the transfer of phosphatidylinositol and phosphatidylcholine between membranes in vitro. The chain is Phosphatidylinositol/phosphatidylcholine transfer protein SFH11 (SFH11) from Arabidopsis thaliana (Mouse-ear cress).